We begin with the raw amino-acid sequence, 417 residues long: Gamma-glutamyl phosphate reductase (417 aa).

This sequence belongs to the gamma-glutamyl phosphate reductase family.

Its subcellular location is the cytoplasm. It catalyses the reaction L-glutamate 5-semialdehyde + phosphate + NADP(+) = L-glutamyl 5-phosphate + NADPH + H(+). It participates in amino-acid biosynthesis; L-proline biosynthesis; L-glutamate 5-semialdehyde from L-glutamate: step 2/2. Functionally, catalyzes the NADPH-dependent reduction of L-glutamate 5-phosphate into L-glutamate 5-semialdehyde and phosphate. The product spontaneously undergoes cyclization to form 1-pyrroline-5-carboxylate. In Escherichia coli (strain 55989 / EAEC), this protein is Gamma-glutamyl phosphate reductase.